Here is a 197-residue protein sequence, read N- to C-terminus: Nucleoside triphosphate pyrophosphatase (197 aa).

Asp-72 (proton acceptor) is an active-site residue.

It belongs to the Maf family. Requires a divalent metal cation as cofactor.

The protein localises to the cytoplasm. The enzyme catalyses a ribonucleoside 5'-triphosphate + H2O = a ribonucleoside 5'-phosphate + diphosphate + H(+). It catalyses the reaction a 2'-deoxyribonucleoside 5'-triphosphate + H2O = a 2'-deoxyribonucleoside 5'-phosphate + diphosphate + H(+). Nucleoside triphosphate pyrophosphatase. May have a dual role in cell division arrest and in preventing the incorporation of modified nucleotides into cellular nucleic acids. This is Nucleoside triphosphate pyrophosphatase from Corynebacterium efficiens (strain DSM 44549 / YS-314 / AJ 12310 / JCM 11189 / NBRC 100395).